Here is an 874-residue protein sequence, read N- to C-terminus: Alanine--tRNA ligase (874 aa).

Residues histidine 564, histidine 568, cysteine 665, and histidine 669 each contribute to the Zn(2+) site.

Belongs to the class-II aminoacyl-tRNA synthetase family. Zn(2+) is required as a cofactor.

The protein resides in the cytoplasm. The catalysed reaction is tRNA(Ala) + L-alanine + ATP = L-alanyl-tRNA(Ala) + AMP + diphosphate. Functionally, catalyzes the attachment of alanine to tRNA(Ala) in a two-step reaction: alanine is first activated by ATP to form Ala-AMP and then transferred to the acceptor end of tRNA(Ala). Also edits incorrectly charged Ser-tRNA(Ala) and Gly-tRNA(Ala) via its editing domain. The sequence is that of Alanine--tRNA ligase from Acidovorax sp. (strain JS42).